The following is a 496-amino-acid chain: Ribose import ATP-binding protein RbsA (496 aa).

2 ABC transporter domains span residues 3-239 and 246-493; these read IVME…VGRE and ERTP…TGGN. Residue 35-42 coordinates ATP; that stretch reads GENGAGKS.

It belongs to the ABC transporter superfamily. Ribose importer (TC 3.A.1.2.1) family. As to quaternary structure, the complex is composed of an ATP-binding protein (RbsA), two transmembrane proteins (RbsC) and a solute-binding protein (RbsB).

The protein localises to the cell membrane. The enzyme catalyses D-ribose(out) + ATP + H2O = D-ribose(in) + ADP + phosphate + H(+). Its function is as follows. Part of the ABC transporter complex RbsABC involved in ribose import. Responsible for energy coupling to the transport system. The protein is Ribose import ATP-binding protein RbsA of Oceanobacillus iheyensis (strain DSM 14371 / CIP 107618 / JCM 11309 / KCTC 3954 / HTE831).